The primary structure comprises 380 residues: Ankyrin repeat domain-containing protein 63 (380 aa).

ANK repeat units follow at residues 11 to 40 (AGTR…RSII), 46 to 79 (QGRT…AVNL), 83 to 112 (RGRT…DPEA), 116 to 145 (AGNS…RLGL), and 153 to 182 (AGLT…RAAA). 2 stretches are compositionally biased toward low complexity: residues 181-203 (AAAA…PAAS) and 216-226 (RPLLARFARAA). The segment at 181 to 256 (AAAAAARGSN…GSERPELGRS (76 aa)) is disordered. The residue at position 193 (Ser193) is a Phosphoserine. Ser294 carries the post-translational modification Phosphoserine. Positions 309–368 (PIGLSPHPEGGPGSGRLGLRRRSTAPDIPSLVGEAPGPESGPELEANALSVSVPGPNPWQ) are disordered.

The sequence is that of Ankyrin repeat domain-containing protein 63 from Homo sapiens (Human).